The following is a 419-amino-acid chain: UDP-N-acetylglucosamine 1-carboxyvinyltransferase (419 aa).

Residue 22-23 coordinates phosphoenolpyruvate; sequence KN. Arginine 95 contributes to the UDP-N-acetyl-alpha-D-glucosamine binding site. The active-site Proton donor is cysteine 119. Residue cysteine 119 is modified to 2-(S-cysteinyl)pyruvic acid O-phosphothioketal. UDP-N-acetyl-alpha-D-glucosamine is bound by residues 164-167, aspartate 308, and isoleucine 330; that span reads KVSV.

Belongs to the EPSP synthase family. MurA subfamily.

Its subcellular location is the cytoplasm. The catalysed reaction is phosphoenolpyruvate + UDP-N-acetyl-alpha-D-glucosamine = UDP-N-acetyl-3-O-(1-carboxyvinyl)-alpha-D-glucosamine + phosphate. It functions in the pathway cell wall biogenesis; peptidoglycan biosynthesis. Its function is as follows. Cell wall formation. Adds enolpyruvyl to UDP-N-acetylglucosamine. This is UDP-N-acetylglucosamine 1-carboxyvinyltransferase from Rickettsia akari (strain Hartford).